A 511-amino-acid chain; its full sequence is ATP synthase subunit alpha (511 aa).

169–176 (GDRQTGKT) contributes to the ATP binding site.

This sequence belongs to the ATPase alpha/beta chains family. In terms of assembly, F-type ATPases have 2 components, CF(1) - the catalytic core - and CF(0) - the membrane proton channel. CF(1) has five subunits: alpha(3), beta(3), gamma(1), delta(1), epsilon(1). CF(0) has three main subunits: a(1), b(2) and c(9-12). The alpha and beta chains form an alternating ring which encloses part of the gamma chain. CF(1) is attached to CF(0) by a central stalk formed by the gamma and epsilon chains, while a peripheral stalk is formed by the delta and b chains.

It localises to the cell inner membrane. It catalyses the reaction ATP + H2O + 4 H(+)(in) = ADP + phosphate + 5 H(+)(out). In terms of biological role, produces ATP from ADP in the presence of a proton gradient across the membrane. The alpha chain is a regulatory subunit. This chain is ATP synthase subunit alpha, found in Bartonella tribocorum (strain CIP 105476 / IBS 506).